We begin with the raw amino-acid sequence, 424 residues long: Kynureninase (424 aa).

Pyridoxal 5'-phosphate-binding positions include Leu-105, Ser-106, Phe-133–Asp-136, Asp-218, His-221, and Tyr-243. Position 244 is an N6-(pyridoxal phosphate)lysine (Lys-244). Trp-274 and Asn-302 together coordinate pyridoxal 5'-phosphate.

This sequence belongs to the kynureninase family. As to quaternary structure, homodimer. Pyridoxal 5'-phosphate is required as a cofactor.

The enzyme catalyses L-kynurenine + H2O = anthranilate + L-alanine + H(+). It catalyses the reaction 3-hydroxy-L-kynurenine + H2O = 3-hydroxyanthranilate + L-alanine + H(+). The protein operates within amino-acid degradation; L-kynurenine degradation; L-alanine and anthranilate from L-kynurenine: step 1/1. Its pathway is cofactor biosynthesis; NAD(+) biosynthesis; quinolinate from L-kynurenine: step 2/3. Its function is as follows. Catalyzes the cleavage of L-kynurenine (L-Kyn) and L-3-hydroxykynurenine (L-3OHKyn) into anthranilic acid (AA) and 3-hydroxyanthranilic acid (3-OHAA), respectively. This chain is Kynureninase, found in Stenotrophomonas maltophilia (strain K279a).